A 185-amino-acid polypeptide reads, in one-letter code: MESPMHLPEVIAVEQESQQMGLSVTAPELHGSLSGLLAGGGCNGPDWLAMILADAGVAAPPKGSVLERLYQATASQLEDPDFAFQLLLADDGATLAARAHALFEWCRAFLGGFGLAAHCRSVLSAEGDEILRDLAKLAQASVDDFDMNEEKEDGSLEEIEEFVRVAVLLLHGDCLIGPCAPQRLN.

It belongs to the UPF0149 family.

This chain is UPF0149 protein PD_0802, found in Xylella fastidiosa (strain Temecula1 / ATCC 700964).